The sequence spans 141 residues: Hemoglobin subunit alpha-A (141 aa).

The region spanning 1 to 141 (VLSASDKTNV…VAKELTAKYR (141 aa)) is the Globin domain. O2 is bound at residue His58. A heme b-binding site is contributed by His87.

This sequence belongs to the globin family. As to quaternary structure, heterotetramer of two alpha chains and two beta chains. As to expression, red blood cells.

Its function is as follows. Involved in oxygen transport from the lung to the various peripheral tissues. This is Hemoglobin subunit alpha-A (HBAA) from Phalacrocorax carbo (Great cormorant).